Here is a 190-residue protein sequence, read N- to C-terminus: Apolipoprotein M (190 aa).

An N-terminal signal peptide occupies residues Met1–Phe17. 3 cysteine pairs are disulfide-bonded: Cys23–Cys169, Cys95–Cys185, and Cys130–Cys159. Tetradecanoate-binding residues include Glu138 and Arg145.

This sequence belongs to the calycin superfamily. Lipocalin family. Highly divergent. In terms of assembly, interacts with LRP2; LRP2 mediates APOM renal uptake and subsequent lysosomal degradation. Expressed by the liver; secreted in plasma.

Its subcellular location is the secreted. Probably involved in lipid transport. Can bind sphingosine-1-phosphate, myristic acid, palmitic acid and stearic acid, retinol, all-trans-retinoic acid and 9-cis-retinoic acid. The polypeptide is Apolipoprotein M (Apom) (Rattus norvegicus (Rat)).